The chain runs to 240 residues: Sialidase 85-1.2 (240 aa).

Positions 127 to 142 are enriched in acidic residues; sequence DDDDGGDDDDEEDSQE. Disordered stretches follow at residues 127 to 158 and 221 to 240; these read DDDD…GKKP and HRGG…QRDA. A compositionally biased stretch (basic and acidic residues) spans 144–155; the sequence is SSPKESSPEKIG.

Belongs to the glycosyl hydrolase 33 family.

The catalysed reaction is Hydrolysis of alpha-(2-&gt;3)-, alpha-(2-&gt;6)-, alpha-(2-&gt;8)- glycosidic linkages of terminal sialic acid residues in oligosaccharides, glycoproteins, glycolipids, colominic acid and synthetic substrates.. Developmentally regulated neuraminidase implicated in parasite invasion of cells. May contribute to the pathology during T.cruzi infection by cleaving sialic acid from cells of the immune system. The chain is Sialidase 85-1.2 (SA85-1.2) from Trypanosoma cruzi.